The primary structure comprises 295 residues: Ribosomal RNA small subunit methyltransferase A (295 aa).

Residues Asn-31, Leu-33, Gly-58, Glu-79, Asp-104, and Asn-129 each coordinate S-adenosyl-L-methionine.

Belongs to the class I-like SAM-binding methyltransferase superfamily. rRNA adenine N(6)-methyltransferase family. RsmA subfamily.

The protein localises to the cytoplasm. It carries out the reaction adenosine(1518)/adenosine(1519) in 16S rRNA + 4 S-adenosyl-L-methionine = N(6)-dimethyladenosine(1518)/N(6)-dimethyladenosine(1519) in 16S rRNA + 4 S-adenosyl-L-homocysteine + 4 H(+). Specifically dimethylates two adjacent adenosines (A1518 and A1519) in the loop of a conserved hairpin near the 3'-end of 16S rRNA in the 30S particle. May play a critical role in biogenesis of 30S subunits. The polypeptide is Ribosomal RNA small subunit methyltransferase A (Enterococcus faecalis (strain ATCC 700802 / V583)).